We begin with the raw amino-acid sequence, 860 residues long: Transforming growth factor-beta receptor-associated protein 1 (860 aa).

In terms of domain architecture, CNH spans 24–297 (RVNIECVECC…HILQDFEGRV (274 aa)). Residues 564 to 728 (RPLDEQQKNS…LLAIYLHAGP (165 aa)) form a CHCR repeat.

This sequence belongs to the TRAP1 family. In terms of assembly, interacts with TGFBR2 and ACVR2B; in the absence of ligand stimulation. Interacts with TGFBR1, ACVRL1, BMPR1A and ACVR1B; in the absence of ligand stimulation and to a less extent. Interacts with SMAD4; the interaction seems to be mutually exclusive with the interaction of SMAD4 and phosphorylated SMAD2. May interact with ALOX5. Interacts with RAB5C. Interacts with VPS8, VPS11 and VPS16. Component of the putative class C core vacuole/endosome tethering (CORVET) complex; the core of which composed of the class C Vps proteins VPS11, VPS16, VPS18 and VPS33A, is associated with VPS8 and TGFBRAP1.

The protein localises to the cytoplasm. It localises to the early endosome. Functionally, plays a role in the TGF-beta/activin signaling pathway. It associates with inactive heteromeric TGF-beta and activin receptor complexes, mainly through the type II receptor, and is released upon activation of signaling. May recruit SMAD4 to the vicinity of the receptor complex and facilitate its interaction with receptor-regulated Smads, such as SMAD2. Its function is as follows. Plays a role in vesicle-mediated protein trafficking of the endocytic membrane transport pathway. Believed to act as a component of the putative CORVET endosomal tethering complexes which is proposed to be involved in the Rab5-to-Rab7 endosome conversion probably implicating MON1A/B, and via binding SNAREs and SNARE complexes to mediate tethering and docking events during SNARE-mediated membrane fusion. The CORVET complex is proposed to function as a Rab5 effector to mediate early endosome fusion probably in specific endosome subpopulations. Functions predominantly in APPL1-containing endosomes and in degradative but not recycling trafficking of endocytosed cargo. This is Transforming growth factor-beta receptor-associated protein 1 (TGFBRAP1) from Homo sapiens (Human).